A 127-amino-acid polypeptide reads, in one-letter code: MAKPTRKRRVKKNIESGIAHIHATFNNTIVMITDVHGNALAWSSAGALGFKGSRKSTPFAAQMAAEAAAKSAQEHGLKTVEVTVKGPGSGRESAIRALAAAGLEVTSIRDVTPVPHNGARPPKRRRV.

It belongs to the universal ribosomal protein uS11 family. As to quaternary structure, part of the 30S ribosomal subunit. Interacts with proteins S7 and S18. Binds to IF-3.

Located on the platform of the 30S subunit, it bridges several disparate RNA helices of the 16S rRNA. Forms part of the Shine-Dalgarno cleft in the 70S ribosome. The chain is Small ribosomal subunit protein uS11 from Streptococcus mutans serotype c (strain ATCC 700610 / UA159).